A 710-amino-acid polypeptide reads, in one-letter code: Pentatricopeptide repeat-containing protein At3g14330 (710 aa).

PPR repeat units lie at residues asparagine 166–serine 196, threonine 200–proline 234, glycine 235–valine 269, aspartate 270–threonine 304, tryptophan 305–glutamate 331, serine 336–proline 370, aspartate 371–lysine 401, aspartate 402–proline 436, aspartate 437–glutamate 467, and alanine 473–lysine 503. A type E motif region spans residues isoleucine 508 to lysine 583. The segment at aspartate 584–glutamate 615 is type E(+) motif. The interval lysine 616–tryptophan 710 is type DYW motif.

It belongs to the PPR family. PCMP-H subfamily.

In Arabidopsis thaliana (Mouse-ear cress), this protein is Pentatricopeptide repeat-containing protein At3g14330 (PCMP-H57).